The following is a 227-amino-acid chain: Probable methylthioribulose-1-phosphate dehydratase (227 aa).

Residue Cys87 participates in substrate binding. Zn(2+) is bound by residues His105 and His107. Glu129 serves as the catalytic Proton donor/acceptor. His185 contacts Zn(2+).

This sequence belongs to the aldolase class II family. MtnB subfamily. Zn(2+) is required as a cofactor.

The protein localises to the cytoplasm. It carries out the reaction 5-(methylsulfanyl)-D-ribulose 1-phosphate = 5-methylsulfanyl-2,3-dioxopentyl phosphate + H2O. It functions in the pathway amino-acid biosynthesis; L-methionine biosynthesis via salvage pathway; L-methionine from S-methyl-5-thio-alpha-D-ribose 1-phosphate: step 2/6. Its function is as follows. Catalyzes the dehydration of methylthioribulose-1-phosphate (MTRu-1-P) into 2,3-diketo-5-methylthiopentyl-1-phosphate (DK-MTP-1-P). The chain is Probable methylthioribulose-1-phosphate dehydratase from Drosophila ananassae (Fruit fly).